Consider the following 322-residue polypeptide: Ribosomal RNA small subunit methyltransferase H (322 aa).

Residues 40-42 (GGH), D60, F84, D106, and Q113 each bind S-adenosyl-L-methionine.

The protein belongs to the methyltransferase superfamily. RsmH family.

It is found in the cytoplasm. The enzyme catalyses cytidine(1402) in 16S rRNA + S-adenosyl-L-methionine = N(4)-methylcytidine(1402) in 16S rRNA + S-adenosyl-L-homocysteine + H(+). Functionally, specifically methylates the N4 position of cytidine in position 1402 (C1402) of 16S rRNA. In Mannheimia succiniciproducens (strain KCTC 0769BP / MBEL55E), this protein is Ribosomal RNA small subunit methyltransferase H.